A 192-amino-acid polypeptide reads, in one-letter code: 7-methyl-GTP pyrophosphatase (192 aa).

Aspartate 69 acts as the Proton acceptor in catalysis.

It belongs to the Maf family. YceF subfamily. It depends on a divalent metal cation as a cofactor.

Its subcellular location is the cytoplasm. The enzyme catalyses N(7)-methyl-GTP + H2O = N(7)-methyl-GMP + diphosphate + H(+). Its function is as follows. Nucleoside triphosphate pyrophosphatase that hydrolyzes 7-methyl-GTP (m(7)GTP). May have a dual role in cell division arrest and in preventing the incorporation of modified nucleotides into cellular nucleic acids. The polypeptide is 7-methyl-GTP pyrophosphatase (maf-2) (Pseudomonas putida (strain ATCC 47054 / DSM 6125 / CFBP 8728 / NCIMB 11950 / KT2440)).